We begin with the raw amino-acid sequence, 549 residues long: Glucose-6-phosphate isomerase (549 aa).

E355 acts as the Proton donor in catalysis. Residues H387 and K515 contribute to the active site.

Belongs to the GPI family.

It localises to the cytoplasm. It carries out the reaction alpha-D-glucose 6-phosphate = beta-D-fructose 6-phosphate. Its pathway is carbohydrate biosynthesis; gluconeogenesis. The protein operates within carbohydrate degradation; glycolysis; D-glyceraldehyde 3-phosphate and glycerone phosphate from D-glucose: step 2/4. Its function is as follows. Catalyzes the reversible isomerization of glucose-6-phosphate to fructose-6-phosphate. The chain is Glucose-6-phosphate isomerase from Pasteurella multocida (strain Pm70).